The sequence spans 536 residues: Caspase A (536 aa).

Positions M1 to D273 are cleaved as a propeptide — removed in mature form by autoprocessing. Residues H364 and C406 contribute to the active site.

Belongs to the peptidase C14A family. In terms of assembly, heterodimer formed by the tight association of the large subunit p16 and the small subunit p14. In terms of processing, autocatalytic cleavage removes the propeptide and generates the two active subunits p16 and p14 in vitro. Cannot be cleaved by ced-3 in vitro. As to expression, isoform a: Expression is restricted to the late germline pachytene stage of meiosis I in both L4 larvae and adult hermaphrodite gonads. Isoform b: Expression is restricted to the late germline pachytene stage of meiosis I in both L4 larvae and adult hermaphrodite gonads.

The enzyme catalyses Strict requirement for an Asp residue at position P1 and has a preferred cleavage sequence of Tyr-Val-Ala-Asp-|-.. With respect to regulation, inhibited by cysteine protease inhibitor iodoacetic acid (CH3COOI) but not by N-[N-(L-3-transcarboxirane-2-carbonyl)-leucyl]-agmatine (E-64) or benzyloxycarbonyl-DEVD-fluoro-methyl ketone (Z-DEVD-FMK). Its function is as follows. Cysteine protease which, in vitro, cleaves itself and caspase ced-3 into their mature active forms. Also cleaves, in vitro, inactive caspase csp-2 isoform b. Required maternally to induce apoptosis in a subset of cells fated to die during embryogenesis, mostly independently of the ced-9, ced-4 and ced-3 canonical apoptosis pathway. Involved in the degeneration of dopaminergic CEP neurons in response to high Mn(2+) levels. Dispensable for regulating apoptosis during embryogenesis. The protein is Caspase A of Caenorhabditis elegans.